The following is a 198-amino-acid chain: dTTP/UTP pyrophosphatase (198 aa).

The active-site Proton acceptor is aspartate 69.

This sequence belongs to the Maf family. YhdE subfamily. A divalent metal cation is required as a cofactor.

The protein resides in the cytoplasm. It carries out the reaction dTTP + H2O = dTMP + diphosphate + H(+). The catalysed reaction is UTP + H2O = UMP + diphosphate + H(+). Nucleoside triphosphate pyrophosphatase that hydrolyzes dTTP and UTP. May have a dual role in cell division arrest and in preventing the incorporation of modified nucleotides into cellular nucleic acids. The sequence is that of dTTP/UTP pyrophosphatase from Idiomarina loihiensis (strain ATCC BAA-735 / DSM 15497 / L2-TR).